The following is a 146-amino-acid chain: Hemoglobin subunit beta (146 aa).

Val1 bears the N-acetylvaline mark. Residues 2–146 enclose the Globin domain; it reads HLTADEKAAV…VATALAHKYH (145 aa). Thr12 carries the post-translational modification Phosphothreonine. The residue at position 44 (Ser44) is a Phosphoserine. Lys59 bears the N6-acetyllysine mark. His63 lines the heme b pocket. Lys82 is subject to N6-acetyllysine. Heme b is bound at residue His92. At Cys93 the chain carries S-nitrosocysteine. Lys144 bears the N6-acetyllysine mark.

Belongs to the globin family. Heterotetramer of two alpha chains and two beta chains. As to expression, red blood cells.

Its function is as follows. Involved in oxygen transport from the lung to the various peripheral tissues. The protein is Hemoglobin subunit beta (HBB) of Cephalopachus bancanus (Western tarsier).